Here is a 390-residue protein sequence, read N- to C-terminus: Tuftelin (390 aa).

Coiled-coil stretches lie at residues 88 to 126 (DKMIHEKNINQLKSEVQYIQEARNCLQKLREDISSKLDR) and 162 to 351 (DTHI…IEKQ). Phosphoserine is present on S171.

This sequence belongs to the tuftelin family. In terms of assembly, interacts with TFIP11. Present in the extracellular enamel and is mainly associated with the crystal component.

The protein resides in the secreted. Functionally, involved in the structural organization of the epidermis. Involved in the mineralization and structural organization of enamel. This is Tuftelin (TUFT1) from Bos taurus (Bovine).